We begin with the raw amino-acid sequence, 142 residues long: Large ribosomal subunit protein uL13 (142 aa).

Belongs to the universal ribosomal protein uL13 family. In terms of assembly, part of the 50S ribosomal subunit.

In terms of biological role, this protein is one of the early assembly proteins of the 50S ribosomal subunit, although it is not seen to bind rRNA by itself. It is important during the early stages of 50S assembly. This is Large ribosomal subunit protein uL13 from Polaromonas sp. (strain JS666 / ATCC BAA-500).